The following is a 476-amino-acid chain: Cysteine--tRNA ligase (476 aa).

Residue Cys-36 coordinates Zn(2+). Positions 38 to 48 (PTVYDYAHIGN) match the 'HIGH' region motif. Residues Cys-221, His-246, and Glu-250 each coordinate Zn(2+). Residues 278–282 (KMSKS) carry the 'KMSKS' region motif. Lys-281 is an ATP binding site.

The protein belongs to the class-I aminoacyl-tRNA synthetase family. Monomer. Zn(2+) serves as cofactor.

The protein localises to the cytoplasm. It catalyses the reaction tRNA(Cys) + L-cysteine + ATP = L-cysteinyl-tRNA(Cys) + AMP + diphosphate. This Chlamydia felis (strain Fe/C-56) (Chlamydophila felis) protein is Cysteine--tRNA ligase.